The primary structure comprises 454 residues: tRNA modification GTPase MnmE (454 aa).

R23, E80, and K120 together coordinate (6S)-5-formyl-5,6,7,8-tetrahydrofolate. Residues 216–377 (GMKVVIAGRP…LRNNLKQSMG (162 aa)) form the TrmE-type G domain. N226 serves as a coordination point for K(+). GTP is bound by residues 226 to 231 (NAGKSS), 245 to 251 (TDIAGTT), 270 to 273 (DTAG), 335 to 338 (NKAD), and 358 to 360 (SAR). S230 serves as a coordination point for Mg(2+). K(+)-binding residues include T245, I247, and T250. T251 serves as a coordination point for Mg(2+). K454 serves as a coordination point for (6S)-5-formyl-5,6,7,8-tetrahydrofolate.

Belongs to the TRAFAC class TrmE-Era-EngA-EngB-Septin-like GTPase superfamily. TrmE GTPase family. Homodimer. Heterotetramer of two MnmE and two MnmG subunits. Requires K(+) as cofactor.

The protein localises to the cytoplasm. Its function is as follows. Exhibits a very high intrinsic GTPase hydrolysis rate. Involved in the addition of a carboxymethylaminomethyl (cmnm) group at the wobble position (U34) of certain tRNAs, forming tRNA-cmnm(5)s(2)U34. In Salmonella paratyphi A (strain AKU_12601), this protein is tRNA modification GTPase MnmE.